A 246-amino-acid chain; its full sequence is tRNA (guanine-N(7)-)-methyltransferase (246 aa).

The segment at 1–23 (MIESSSPTPPALHEGAPADVSHP) is disordered. Positions 75, 100, 127, and 150 each coordinate S-adenosyl-L-methionine. Residue Asp-150 is part of the active site. Lys-154 is a substrate binding site. An interaction with RNA region spans residues 156-161 (KHNKRR). Substrate is bound by residues Asp-186 and 225–228 (TKFE).

This sequence belongs to the class I-like SAM-binding methyltransferase superfamily. TrmB family.

It catalyses the reaction guanosine(46) in tRNA + S-adenosyl-L-methionine = N(7)-methylguanosine(46) in tRNA + S-adenosyl-L-homocysteine. Its pathway is tRNA modification; N(7)-methylguanine-tRNA biosynthesis. Catalyzes the formation of N(7)-methylguanine at position 46 (m7G46) in tRNA. The chain is tRNA (guanine-N(7)-)-methyltransferase from Polaromonas naphthalenivorans (strain CJ2).